A 492-amino-acid polypeptide reads, in one-letter code: Peptidyl-prolyl cis-trans isomerase-like 4 (492 aa).

The 161-residue stretch at 1-161 (MAVLLETTLG…QDIRINHTVI (161 aa)) folds into the PPIase cyclophilin-type domain. Positions 167-188 (DDPPDLLIPDRSPEPTREQLDS) are disordered. Over residues 177-187 (RSPEPTREQLD) the composition is skewed to basic and acidic residues. S178 bears the Phosphoserine mark. T182 is modified (phosphothreonine). Residues K201, K212, and K218 each participate in a glycyl lysine isopeptide (Lys-Gly) (interchain with G-Cter in SUMO2) cross-link. One can recognise an RRM domain in the interval 240-318 (NVLFVCKLNP…RRIHVDFSQS (79 aa)). Residues K321 and K362 each participate in a glycyl lysine isopeptide (Lys-Gly) (interchain with G-Cter in SUMO2) cross-link. Disordered stretches follow at residues 368–406 (DEQA…PIKN) and 423–492 (EESC…SKYR). Positions 377–390 (SHSHTSKKHKKKTH) are enriched in basic residues. At S393 the chain carries Phosphoserine. K405 participates in a covalent cross-link: Glycyl lysine isopeptide (Lys-Gly) (interchain with G-Cter in SUMO2). Basic and acidic residues predominate over residues 426-452 (CWEKQKSEKRDRTQNRSRSRSRERDGH). K460 is covalently cross-linked (Glycyl lysine isopeptide (Lys-Gly) (interchain with G-Cter in SUMO2)). Residue S471 is modified to Phosphoserine. A compositionally biased stretch (basic and acidic residues) spans 482-492 (KSKDKEKSKYR).

Belongs to the cyclophilin-type PPIase family. PPIL4 subfamily. In terms of tissue distribution, abundantly expressed in kidney but has a ubiquitously low expression pattern in other adult tissues.

The protein resides in the nucleus. The enzyme catalyses [protein]-peptidylproline (omega=180) = [protein]-peptidylproline (omega=0). Its function is as follows. PPIases accelerate the folding of proteins. It catalyzes the cis-trans isomerization of proline imidic peptide bonds in oligopeptides. The polypeptide is Peptidyl-prolyl cis-trans isomerase-like 4 (PPIL4) (Homo sapiens (Human)).